Consider the following 375-residue polypeptide: Aminomethyltransferase (375 aa).

The protein belongs to the GcvT family. The glycine cleavage system is composed of four proteins: P, T, L and H.

It carries out the reaction N(6)-[(R)-S(8)-aminomethyldihydrolipoyl]-L-lysyl-[protein] + (6S)-5,6,7,8-tetrahydrofolate = N(6)-[(R)-dihydrolipoyl]-L-lysyl-[protein] + (6R)-5,10-methylene-5,6,7,8-tetrahydrofolate + NH4(+). The glycine cleavage system catalyzes the degradation of glycine. The sequence is that of Aminomethyltransferase from Cupriavidus metallidurans (strain ATCC 43123 / DSM 2839 / NBRC 102507 / CH34) (Ralstonia metallidurans).